The primary structure comprises 615 residues: UvrABC system protein C (615 aa).

Residues 14–91 (TSPGCYIHKD…IKENKPKYNI (78 aa)) form the GIY-YIG domain. Residues 196 to 231 (NKIIDELKGKMAAAAQTMEFERAAEYRDLIQAIGTL) enclose the UVR domain.

This sequence belongs to the UvrC family. Interacts with UvrB in an incision complex.

It is found in the cytoplasm. Functionally, the UvrABC repair system catalyzes the recognition and processing of DNA lesions. UvrC both incises the 5' and 3' sides of the lesion. The N-terminal half is responsible for the 3' incision and the C-terminal half is responsible for the 5' incision. The polypeptide is UvrABC system protein C (Streptococcus pneumoniae (strain JJA)).